A 410-amino-acid chain; its full sequence is Gamma-glutamyl phosphate reductase (410 aa).

The protein belongs to the gamma-glutamyl phosphate reductase family.

The protein localises to the cytoplasm. It catalyses the reaction L-glutamate 5-semialdehyde + phosphate + NADP(+) = L-glutamyl 5-phosphate + NADPH + H(+). The protein operates within amino-acid biosynthesis; L-proline biosynthesis; L-glutamate 5-semialdehyde from L-glutamate: step 2/2. In terms of biological role, catalyzes the NADPH-dependent reduction of L-glutamate 5-phosphate into L-glutamate 5-semialdehyde and phosphate. The product spontaneously undergoes cyclization to form 1-pyrroline-5-carboxylate. In Sulfurimonas denitrificans (strain ATCC 33889 / DSM 1251) (Thiomicrospira denitrificans (strain ATCC 33889 / DSM 1251)), this protein is Gamma-glutamyl phosphate reductase.